The primary structure comprises 87 residues: Exendin-3 (87 aa).

The signal sequence occupies residues 1 to 21 (MKIILWLCVFGLFLATLFPVS). A propeptide spanning residues 22 to 45 (WQMPVESGLSSEDSASSESFASKI) is cleaved from the precursor. Serine amide is present on S86.

It belongs to the glucagon family. In terms of tissue distribution, expressed by the venom gland.

Its subcellular location is the secreted. In terms of biological role, stimulates vasoactive intestinal peptide (VIP) receptors in high concentrations (&gt;100 nM), resulting in both an increase in cAMP and amylase secretion from pancreatic acini, although at low concentrations (between 0.3 and 3 nM) it increases cAMP without stimulating amylase release. Stimulates the GLP-1 receptor (GLP1R). Induces hypotension that is mediated by relaxation of cardiac smooth muscle. The sequence is that of Exendin-3 from Heloderma horridum horridum (Mexican beaded lizard).